A 377-amino-acid polypeptide reads, in one-letter code: WAT1-related protein At3g56620 (377 aa).

10 helical membrane-spanning segments follow: residues 13–33, 40–60, 67–87, 102–122, 142–162, 183–203, 210–230, 235–255, 274–294, and 299–319; these read FAMV…KVVL, YVLV…FALL, PKMT…GPLI, TFAG…SIIC, LVIV…ITFL, VFLL…AATL, LSLS…LTFV, LSAW…AGIM, IFVT…GFLI, and LNLG…TVLW. 2 EamA domains span residues 22–152 and 190–318; these read YAGM…MLMI and FSWA…CTVL.

It belongs to the drug/metabolite transporter (DMT) superfamily. Plant drug/metabolite exporter (P-DME) (TC 2.A.7.4) family.

It is found in the membrane. The protein is WAT1-related protein At3g56620 of Arabidopsis thaliana (Mouse-ear cress).